The chain runs to 724 residues: Protein-glutamine gamma-glutamyltransferase 5 (724 aa).

Ala-2 is subject to N-acetylalanine. Active-site residues include Cys-283, His-342, and Asp-365. Asn-405, Asp-407, Glu-453, and Glu-458 together coordinate Ca(2+). Composition is skewed to polar residues over residues Arg-473 to Ser-486 and Ala-495 to Pro-505. Residues Arg-473–Pro-505 are disordered.

Belongs to the transglutaminase superfamily. Transglutaminase family. The cofactor is Ca(2+).

The protein resides in the cytoplasm. The catalysed reaction is L-glutaminyl-[protein] + L-lysyl-[protein] = [protein]-L-lysyl-N(6)-5-L-glutamyl-[protein] + NH4(+). Functionally, catalyzes the cross-linking of proteins and the conjugation of polyamines to proteins. Contributes to the formation of the cornified cell envelope of keratinocytes. This Mus musculus (Mouse) protein is Protein-glutamine gamma-glutamyltransferase 5 (Tgm5).